Reading from the N-terminus, the 100-residue chain is NADH-quinone oxidoreductase subunit K (100 aa).

3 consecutive transmembrane segments (helical) span residues 2 to 22 (IGLS…LMGV), 29 to 49 (LMLF…FAAI), and 63 to 83 (FFII…LIVL).

This sequence belongs to the complex I subunit 4L family. NDH-1 is composed of 14 different subunits. Subunits NuoA, H, J, K, L, M, N constitute the membrane sector of the complex.

Its subcellular location is the cell inner membrane. It catalyses the reaction a quinone + NADH + 5 H(+)(in) = a quinol + NAD(+) + 4 H(+)(out). Its function is as follows. NDH-1 shuttles electrons from NADH, via FMN and iron-sulfur (Fe-S) centers, to quinones in the respiratory chain. The immediate electron acceptor for the enzyme in this species is believed to be ubiquinone. Couples the redox reaction to proton translocation (for every two electrons transferred, four hydrogen ions are translocated across the cytoplasmic membrane), and thus conserves the redox energy in a proton gradient. This chain is NADH-quinone oxidoreductase subunit K, found in Sulfurovum sp. (strain NBC37-1).